The chain runs to 575 residues: Adenine deaminase (575 aa).

The protein belongs to the metallo-dependent hydrolases superfamily. Adenine deaminase family. Requires Mn(2+) as cofactor.

It carries out the reaction adenine + H2O + H(+) = hypoxanthine + NH4(+). This Nitratidesulfovibrio vulgaris (strain DP4) (Desulfovibrio vulgaris) protein is Adenine deaminase.